The chain runs to 608 residues: Alpha-1,3-galactosidase A (608 aa).

The first 21 residues, methionine 1–glycine 21, serve as a signal peptide directing secretion. Cysteine 22 carries the N-palmitoyl cysteine lipid modification. Residue cysteine 22 is the site of S-diacylglycerol cysteine attachment. PbH1 repeat units lie at residues threonine 262 to asparagine 292, lysine 318 to glycine 340, proline 426 to valine 448, serine 449 to serine 470, and valine 481 to proline 507.

It belongs to the glycosyl hydrolase 110 family. A subfamily.

The protein resides in the cell membrane. It catalyses the reaction Hydrolysis of terminal, non-reducing branched (1-&gt;3)-alpha-D-galactosidic residues, producing free D-galactose.. It carries out the reaction Hydrolysis of terminal, non-reducing alpha-D-galactose residues in alpha-D-galactosides, including galactose oligosaccharides, galactomannans and galactolipids.. In terms of biological role, alpha-galactosidase that specifically removes branched alpha-1,3-linked galactose residues present in blood group B antigens. Has no activity toward linear alpha-1,3-linked galactose residues. This Shewanella woodyi (strain ATCC 51908 / MS32) protein is Alpha-1,3-galactosidase A (glaA).